Consider the following 62-residue polypeptide: DCPSDWSSYEGHCYRVFKPPKDWADAERFCSQQAKGGHLVSIERFGREDFVSNLITKNLQRG.

Residues Cys2 and Cys13 are joined by a disulfide bond. Residues 9–62 enclose the C-type lectin domain; the sequence is YEGHCYRVFKPPKDWADAERFCSQQAKGGHLVSIERFGREDFVSNLITKNLQRG.

This sequence belongs to the snaclec family. As to quaternary structure, heterodimer; disulfide-linked. Expressed by the venom gland.

The protein resides in the secreted. Snaclec that binds to von Willebrand factor (VWF) and induces its interaction with GPIbalpha (GP1BA) (via the vWF A1 domain), resulting in platelet aggregation. Intramuscular and intravenous injections in mice induce a dose-dependent drop in platelet count (thrombocytopenia). Pretreatment by intravenous injection by this protein in mice potentiates the hemorrhagic lesion in the skin provoked by the metalloproteinase BaP1 intradermally injected. This result is not observed when both BaP1 and this protein are injected simultaneously. In Bothrops asper (Terciopelo), this protein is Snaclec aspercetin subunit beta.